Reading from the N-terminus, the 228-residue chain is Probable septum site-determining protein MinC (228 aa).

The protein belongs to the MinC family. As to quaternary structure, interacts with MinD and FtsZ.

Its function is as follows. Cell division inhibitor that blocks the formation of polar Z ring septums. Rapidly oscillates between the poles of the cell to destabilize FtsZ filaments that have formed before they mature into polar Z rings. Prevents FtsZ polymerization. This chain is Probable septum site-determining protein MinC, found in Bacillus anthracis (strain A0248).